The primary structure comprises 391 residues: Thioredoxin-interacting protein (391 aa).

Residue Lys212 forms a Glycyl lysine isopeptide (Lys-Gly) (interchain with G-Cter in ubiquitin) linkage. The residue at position 361 (Ser361) is a Phosphoserine.

This sequence belongs to the arrestin family. As to quaternary structure, homodimer; disulfide-linked. Interacts with TXN/thioredoxin through its redox-active site. Interacts with transcriptional repressors ZBTB16, ZBTB32 and HDAC1. Interacts with DDIT4. Ubiquitinated; undergoes heterotypic 'Lys-48'-/'Lys-63'-branched polyubiquitination catalyzed by ITCH and UBR5 resulting in proteasomal degradation. Deubiquitinated by USP5, leading to TXNIP stabilization.

The protein resides in the cytoplasm. It localises to the nucleus. May act as an oxidative stress mediator by inhibiting thioredoxin activity or by limiting its bioavailability. Interacts with COPS5 and restores COPS5-induced suppression of CDKN1B stability, blocking the COPS5-mediated translocation of CDKN1B from the nucleus to the cytoplasm. Functions as a transcriptional repressor, possibly by acting as a bridge molecule between transcription factors and corepressor complexes, and over-expression will induce G0/G1 cell cycle arrest. Required for the maturation of natural killer cells. Acts as a suppressor of tumor cell growth. Inhibits the proteasomal degradation of DDIT4, and thereby contributes to the inhibition of the mammalian target of rapamycin complex 1 (mTORC1). The polypeptide is Thioredoxin-interacting protein (TXNIP) (Homo sapiens (Human)).